A 189-amino-acid chain; its full sequence is Protein GrpE (189 aa).

Positions 1–13 are enriched in polar residues; it reads MSENKQPEQNQDL. The interval 1-35 is disordered; it reads MSENKQPEQNQDLTGEPSPEELEAAQAADEFDAMN.

This sequence belongs to the GrpE family. As to quaternary structure, homodimer.

The protein resides in the cytoplasm. Functionally, participates actively in the response to hyperosmotic and heat shock by preventing the aggregation of stress-denatured proteins, in association with DnaK and GrpE. It is the nucleotide exchange factor for DnaK and may function as a thermosensor. Unfolded proteins bind initially to DnaJ; upon interaction with the DnaJ-bound protein, DnaK hydrolyzes its bound ATP, resulting in the formation of a stable complex. GrpE releases ADP from DnaK; ATP binding to DnaK triggers the release of the substrate protein, thus completing the reaction cycle. Several rounds of ATP-dependent interactions between DnaJ, DnaK and GrpE are required for fully efficient folding. The polypeptide is Protein GrpE (Polaromonas naphthalenivorans (strain CJ2)).